The chain runs to 412 residues: DNA polymerase IV 2 (412 aa).

One can recognise a UmuC domain in the interval 7-192 (IFLVDMQSFY…LPVGSMFGVG (186 aa)). Mg(2+) contacts are provided by Asp11 and Asp107. Glu108 is an active-site residue.

Belongs to the DNA polymerase type-Y family. In terms of assembly, monomer. Mg(2+) is required as a cofactor.

The protein resides in the cytoplasm. It carries out the reaction DNA(n) + a 2'-deoxyribonucleoside 5'-triphosphate = DNA(n+1) + diphosphate. Its function is as follows. Poorly processive, error-prone DNA polymerase involved in untargeted mutagenesis. Copies undamaged DNA at stalled replication forks, which arise in vivo from mismatched or misaligned primer ends. These misaligned primers can be extended by PolIV. Exhibits no 3'-5' exonuclease (proofreading) activity. May be involved in translesion synthesis (TSL), in conjunction with the beta clamp from PolIII. The sequence is that of DNA polymerase IV 2 (dinB2) from Bacillus subtilis (strain 168).